Consider the following 304-residue polypeptide: Acetaldehyde dehydrogenase 4 (304 aa).

Cys131 acts as the Acyl-thioester intermediate in catalysis. Residues Ser162–Asn170 and Asn273 contribute to the NAD(+) site.

It belongs to the acetaldehyde dehydrogenase family.

The catalysed reaction is acetaldehyde + NAD(+) + CoA = acetyl-CoA + NADH + H(+). This is Acetaldehyde dehydrogenase 4 from Dechloromonas aromatica (strain RCB).